A 392-amino-acid chain; its full sequence is Esterase EstB (392 aa).

Ser-75 functions as the Acyl-ester intermediate in the catalytic mechanism.

It belongs to the class-A beta-lactamase family.

Its subcellular location is the cytoplasm. With respect to regulation, strongly inhibited by eserin, NaF, HgCl2, SDS and Triton X-100. Functionally, acts on short-chain (C4-C6) fatty acid esters and triglycerides, including tertiary alcohol esters. Activity on p-nitrophenyl esters is generally higher than on o-nitrophenyl esters. Lacks beta-lactamase activity; it hydrolyzes the ester bond of cephalosporin substrates but there is no opening of the beta-lactam ring observed. This is Esterase EstB (estB) from Burkholderia gladioli (Pseudomonas marginata).